The following is a 400-amino-acid chain: Probable glucan endo-1,6-beta-glucosidase B (400 aa).

Residues 1-17 form the signal peptide; sequence MIRRLAALSALSGLATA. N30 carries an N-linked (GlcNAc...) asparagine glycan. E219 acts as the Proton donor in catalysis. N-linked (GlcNAc...) asparagine glycosylation occurs at N272. E320 serves as the catalytic Nucleophile.

This sequence belongs to the glycosyl hydrolase 5 (cellulase A) family.

The protein localises to the secreted. The enzyme catalyses Random hydrolysis of (1-&gt;6)-linkages in (1-&gt;6)-beta-D-glucans.. Beta-glucanases participate in the metabolism of beta-glucan, the main structural component of the cell wall. Acts on lutean, pustulan and 1,6-oligo-beta-D-glucosides. The chain is Probable glucan endo-1,6-beta-glucosidase B (exgB) from Neosartorya fischeri (strain ATCC 1020 / DSM 3700 / CBS 544.65 / FGSC A1164 / JCM 1740 / NRRL 181 / WB 181) (Aspergillus fischerianus).